A 205-amino-acid polypeptide reads, in one-letter code: Low-density lipoprotein receptor class A domain-containing protein 1 (205 aa).

The helical transmembrane segment at 43 to 63 (LLLLLATVAALIALVTILGLP) threads the bilayer. Residues 71–114 (ACITLTNRTGFLCHDQRSCIPASGVCDGVRTCTHGEDEDESLCR) form the LDL-receptor class A 1 domain. 6 disulfide bridges follow: cysteine 72–cysteine 89, cysteine 83–cysteine 102, cysteine 96–cysteine 113, cysteine 141–cysteine 160, cysteine 163–cysteine 180, and cysteine 170–cysteine 193. The LDL-receptor class A 2; atypical domain maps to 115–161 (DVPQSLPHFLVAHCGDPASWIYSDQKCDGTNNCGDCSDELSPVTVCP). An LDL-receptor class A 3; atypical domain is found at 162-203 (PCGPGWWRCPSTFFKYCDCIPRHLCRDHVQHCSDWSDEYACP).

Belongs to the LDLR family.

It localises to the membrane. This Homo sapiens (Human) protein is Low-density lipoprotein receptor class A domain-containing protein 1 (LDLRAD1).